A 270-amino-acid chain; its full sequence is Putative F-box protein At3g24700 (270 aa).

An F-box domain is found at 1–45; it reads MLTDLPLDLESEILSRVPATSLQRLKTTCKRWYALFRDPRFVKKN.

The sequence is that of Putative F-box protein At3g24700 from Arabidopsis thaliana (Mouse-ear cress).